Here is a 252-residue protein sequence, read N- to C-terminus: MVPVGPERGANSLFSLRFTTFAVGTVSLPLFAFLFCIVWSLLFNFSETTATHCHVPNYLPSVSAAIGGETPQRYIWRLCIGLHSAPRFLVGVAYLHYYQGTPCSSPAYPRLCHLNFLLNCCEIFFLILLTYVSSSENYEVHKLGFMAFMLFSVGYMFVTCSLWRVARKGSGSLEERTSYAWKKRLFGFYLLMFLSSILVYIWHNMYCEAGVYTVFALLEYLVVLSNMGFHMTAWWDFGNKELMICSPGDKRI.

Residues 1-22 lie on the Cytoplasmic side of the membrane; the sequence is MVPVGPERGANSLFSLRFTTFA. Residues 23–43 form a helical membrane-spanning segment; the sequence is VGTVSLPLFAFLFCIVWSLLF. The Lumenal portion of the chain corresponds to 44-77; the sequence is NFSETTATHCHVPNYLPSVSAAIGGETPQRYIWR. The helical transmembrane segment at 78–98 threads the bilayer; sequence LCIGLHSAPRFLVGVAYLHYY. The Cytoplasmic segment spans residues 99 to 111; it reads QGTPCSSPAYPRL. A helical membrane pass occupies residues 112–132; the sequence is CHLNFLLNCCEIFFLILLTYV. The Lumenal portion of the chain corresponds to 133–142; it reads SSSENYEVHK. Residues 143–163 traverse the membrane as a helical segment; it reads LGFMAFMLFSVGYMFVTCSLW. Topologically, residues 164–184 are cytoplasmic; sequence RVARKGSGSLEERTSYAWKKR. A helical membrane pass occupies residues 185 to 205; the sequence is LFGFYLLMFLSSILVYIWHNM. Residues 206–208 lie on the Lumenal side of the membrane; the sequence is YCE. Residues 209–229 form a helical membrane-spanning segment; the sequence is AGVYTVFALLEYLVVLSNMGF. Topologically, residues 230–252 are cytoplasmic; it reads HMTAWWDFGNKELMICSPGDKRI.

The protein belongs to the PGAP2 family.

The protein resides in the golgi apparatus membrane. Functionally, involved in the fatty acid remodeling steps of GPI-anchor maturation where the unsaturated acyl chain at sn-2 of inositol phosphate is replaced by a saturated stearoyl chain. May catalyze the second step of the fatty acid remodeling, by reacylating a lyso-GPI intermediate at sn-2 of inositol phosphate by a saturated chain. The fatty acid remodeling steps is critical for the integration of GPI-APs into lipid rafts. The polypeptide is Acyltransferase PGAP2 (Xenopus tropicalis (Western clawed frog)).